Reading from the N-terminus, the 409-residue chain is Tryptophan synthase beta chain (409 aa).

At Lys-98 the chain carries N6-(pyridoxal phosphate)lysine.

It belongs to the TrpB family. Tetramer of two alpha and two beta chains. Pyridoxal 5'-phosphate serves as cofactor.

It catalyses the reaction (1S,2R)-1-C-(indol-3-yl)glycerol 3-phosphate + L-serine = D-glyceraldehyde 3-phosphate + L-tryptophan + H2O. It functions in the pathway amino-acid biosynthesis; L-tryptophan biosynthesis; L-tryptophan from chorismate: step 5/5. In terms of biological role, the beta subunit is responsible for the synthesis of L-tryptophan from indole and L-serine. This is Tryptophan synthase beta chain (trpB) from Cereibacter sphaeroides (strain ATCC 17023 / DSM 158 / JCM 6121 / CCUG 31486 / LMG 2827 / NBRC 12203 / NCIMB 8253 / ATH 2.4.1.) (Rhodobacter sphaeroides).